The following is a 475-amino-acid chain: Ribulose bisphosphate carboxylase large chain (475 aa).

A propeptide spanning residues 1 to 2 (MS) is cleaved from the precursor. Pro3 bears the N-acetylproline mark. At Lys14 the chain carries N6,N6,N6-trimethyllysine. The substrate site is built by Asn123 and Thr173. The Proton acceptor role is filled by Lys175. Lys177 is a substrate binding site. The Mg(2+) site is built by Lys201, Asp203, and Glu204. At Lys201 the chain carries N6-carboxylysine. The Proton acceptor role is filled by His294. Arg295, His327, and Ser379 together coordinate substrate.

This sequence belongs to the RuBisCO large chain family. Type I subfamily. As to quaternary structure, heterohexadecamer of 8 large chains and 8 small chains; disulfide-linked. The disulfide link is formed within the large subunit homodimers. Mg(2+) is required as a cofactor. The disulfide bond which can form in the large chain dimeric partners within the hexadecamer appears to be associated with oxidative stress and protein turnover.

The protein localises to the plastid. It is found in the chloroplast. It catalyses the reaction 2 (2R)-3-phosphoglycerate + 2 H(+) = D-ribulose 1,5-bisphosphate + CO2 + H2O. The enzyme catalyses D-ribulose 1,5-bisphosphate + O2 = 2-phosphoglycolate + (2R)-3-phosphoglycerate + 2 H(+). In terms of biological role, ruBisCO catalyzes two reactions: the carboxylation of D-ribulose 1,5-bisphosphate, the primary event in carbon dioxide fixation, as well as the oxidative fragmentation of the pentose substrate in the photorespiration process. Both reactions occur simultaneously and in competition at the same active site. The protein is Ribulose bisphosphate carboxylase large chain of Tsuga heterophylla (Western hemlock).